Consider the following 816-residue polypeptide: Sucrose synthase 2 (816 aa).

The tract at residues 280–757 (MVLNVVILSP…GLQRIEEKYT (478 aa)) is GT-B glycosyltransferase.

The protein belongs to the glycosyltransferase 1 family. Plant sucrose synthase subfamily. As to quaternary structure, forms homotetramers and heterotetramers with SS1, all three possible heterotetramers are formed. As to expression, abundant in developing endosperm, low in aleurone, and undetected in coleoptiles and roots. Also detected in crude extracts of anthers and in immature embryos.

The enzyme catalyses an NDP-alpha-D-glucose + D-fructose = a ribonucleoside 5'-diphosphate + sucrose + H(+). Its function is as follows. Sucrose-cleaving enzyme that provides UDP-glucose and fructose for various metabolic pathways. This chain is Sucrose synthase 2 (SS2), found in Hordeum vulgare (Barley).